A 293-amino-acid polypeptide reads, in one-letter code: MNQNNDFKCHIWFTEYHNNNVALSVRVKDILYREKSGFQEIEIIDTYDFGKALILDNTFQTTERDEFIYHELISHIPLFTHPNPRNVLVIGGGDGGTVREVVKHKSVETVDFVELDEKVIEACKKYMPKLSCEIDNEKVNLIITDGIKYVAETEKKYDVIIVDCPDPVGPAKGLFEKEFYKNVFKCLNDDGIMVQQSESPLYNLDLIQNICRYLKDAGFKIIMPYTYPMPTYPSGFWSFTLASKKYNPLEVDEARIKEALKDMETKYYDEEVHKGIFLAAPKFLKDAVKKALE.

Positions 10 to 244 (HIWFTEYHNN…GFWSFTLASK (235 aa)) constitute a PABS domain. Q39 contributes to the S-methyl-5'-thioadenosine binding site. Spermidine contacts are provided by H70 and D94. S-methyl-5'-thioadenosine is bound by residues E114 and 145–146 (DG). D163 serves as the catalytic Proton acceptor. 163 to 166 (DCPD) contributes to the spermidine binding site. P170 contacts S-methyl-5'-thioadenosine.

The protein belongs to the spermidine/spermine synthase family. As to quaternary structure, homodimer or homotetramer.

It localises to the cytoplasm. The catalysed reaction is S-adenosyl 3-(methylsulfanyl)propylamine + putrescine = S-methyl-5'-thioadenosine + spermidine + H(+). It functions in the pathway amine and polyamine biosynthesis; spermidine biosynthesis; spermidine from putrescine: step 1/1. Its function is as follows. Catalyzes the irreversible transfer of a propylamine group from the amino donor S-adenosylmethioninamine (decarboxy-AdoMet) to putrescine (1,4-diaminobutane) to yield spermidine. This chain is Polyamine aminopropyltransferase, found in Methanocaldococcus jannaschii (strain ATCC 43067 / DSM 2661 / JAL-1 / JCM 10045 / NBRC 100440) (Methanococcus jannaschii).